The following is a 276-amino-acid chain: Stathmin domain-containing protein 1 (276 aa).

Disordered stretches follow at residues 1 to 40 (MGCG…ENCS), 61 to 106 (VQMG…RERQ), and 226 to 250 (GFEP…ATLI). Residue Gly2 is the site of N-myristoyl glycine attachment. Polar residues-rich tracts occupy residues 68-78 (GTISENSPSPS) and 87-100 (DLVT…PQSL). The SLD domain maps to 118-244 (QGIIQSHSKV…GKPLKRKKSK (127 aa)).

This is Stathmin domain-containing protein 1 (STMND1) from Homo sapiens (Human).